The following is a 239-amino-acid chain: Tetraspanin-9 (239 aa).

Residues 1–13 (MARGCLCCLKYMM) lie on the Cytoplasmic side of the membrane. A helical membrane pass occupies residues 14 to 34 (FLFNLIFWLCGCGLLGVGIWL). Over 35 to 55 (SVSQGNFATFSPSFPSLSAAN) the chain is Extracellular. Residues 56 to 76 (LVIAIGTIVMVTGFLGCLGAI) traverse the membrane as a helical segment. Residues 77–85 (KENKCLLLS) are Cytoplasmic-facing. A helical membrane pass occupies residues 86–106 (FFIILLIILLAELILLILFFV). Residues 107-203 (YMDKVNENAK…VKMWFDDNKH (97 aa)) lie on the Extracellular side of the membrane. Asn-180 carries an N-linked (GlcNAc...) asparagine glycan. A helical membrane pass occupies residues 204-224 (VLGTIGMCILIIQILGMAFSM). The Cytoplasmic portion of the chain corresponds to 225-239 (TLFQQIHRTGKKYDA).

Belongs to the tetraspanin (TM4SF) family.

The protein localises to the membrane. This chain is Tetraspanin-9 (tspan9), found in Xenopus tropicalis (Western clawed frog).